The sequence spans 247 residues: Protein McbF (247 aa).

In terms of domain architecture, ABC transporter spans 6–234 (LEINSLSFSY…NNETTQKRHL (229 aa)). 40-47 (GENPAGKT) serves as a coordination point for ATP.

Belongs to the ABC transporter superfamily.

In terms of biological role, together with two further proteins McbE and McbG this protein causes immunity to the peptide antibiotic microcin B17, which inhibits DNA replication in enterobacteriaceae. Immunity is determined by two different mechanisms. McbE is involved in the production of extracellular MccB17 and, in a complex with mcbf it also serves as 'pump' for the export of active MccB17 from the cytoplasm to the periplasmic space. In Escherichia coli, this protein is Protein McbF (mcbF).